We begin with the raw amino-acid sequence, 654 residues long: Potassium voltage-gated channel subfamily A member 4 (654 aa).

At 1-305 the chain is on the cytoplasmic side; sequence MEVAMVSAES…LLFEYPESSS (305 aa). Residues 39–52 are compositionally biased toward low complexity; the sequence is AAAAAVAAATAAVE. A disordered region spans residues 39–146; sequence AAAAAVAAAT…EGRFYYSEDD (108 aa). The span at 81-99 shows a compositional bias: basic residues; the sequence is GSRRRRRQRPEKKKAHHRQ. S122 carries the phosphoserine modification. Positions 122–137 are enriched in acidic residues; sequence SEEEEEEEDEEEEEEE. Residues 306 to 327 traverse the membrane as a helical segment; that stretch reads PARGIAIVSVLVILISIVIFCL. Residues 328 to 371 lie on the Extracellular side of the membrane; sequence ETLPEFRDDRDLIMALSAGGHSGLLNDTSAPHLENSGHTIFNDP. N-linked (GlcNAc...) asparagine glycosylation occurs at N353. Residues 372-393 traverse the membrane as a helical segment; that stretch reads FFIVETVCIVWFSFEFVVRCFA. The Cytoplasmic segment spans residues 394–404; the sequence is CPSQALFFKNI. The helical transmembrane segment at 405–425 threads the bilayer; it reads MNIIDIVSILPYFITLGTDLA. The Extracellular segment spans residues 426-440; sequence QQQGGGNGQQQQAMS. Residues 441–461 traverse the membrane as a helical; Voltage-sensor segment; sequence FAILRIIRLVRVFRIFKLSRH. Residues 462 to 476 are Cytoplasmic-facing; it reads SKGLQILGHTLRASM. The S4-S5 linker stretch occupies residues 463–476; that stretch reads KGLQILGHTLRASM. The helical transmembrane segment at 477–498 threads the bilayer; the sequence is RELGLLIFFLFIGVILFSSAVY. Topologically, residues 499–512 are extracellular; that stretch reads FAEADEPTTHFQSI. Residues 513-524 constitute an intramembrane region (helical); that stretch reads PDAFWWAVVTMT. A Selectivity filter motif is present at residues 525–530; the sequence is TVGYGD. Residues 525–532 lie within the membrane without spanning it; the sequence is TVGYGDMK. Over 533–539 the chain is Extracellular; it reads PITVGGK. Residues 540 to 568 traverse the membrane as a helical segment; that stretch reads IVGSLCAIAGVLTIALPVPVIVSNFNYFY. Residues 569–654 are Cytoplasmic-facing; the sequence is HRETENEEQT…SNAKAVETDV (86 aa). Phosphoserine; by PKA is present on S600. A compositionally biased stretch (basic and acidic residues) spans 630–641; the sequence is CQGKGDDSETDK. A disordered region spans residues 630 to 654; that stretch reads CQGKGDDSETDKNNCSNAKAVETDV. A PDZ-binding motif is present at residues 652 to 654; it reads TDV.

The protein belongs to the potassium channel family. A (Shaker) (TC 1.A.1.2) subfamily. Kv1.4/KCNA4 sub-subfamily. As to quaternary structure, homotetramer and heterotetramer of potassium channel proteins. Interacts with KCNAB1 and KCNAB2. Interacts with DLG1, DLG2 and DLG4 via their PDZ domains. Interacts with SIGMAR1. Detected in a complex with KCNA1. Interacts with KCNA2. Part of a complex containing KCNA1, KCNAB1 and LGI1. Interacts (via cytoplasmic N-terminal domain) with KCNRG. Detectable in brain, atrium, left and right ventricle, and kidney, but not in skeletal muscle, endothelial cells, aorta, and liver.

The protein localises to the cell membrane. Its subcellular location is the cell projection. It is found in the axon. It carries out the reaction K(+)(in) = K(+)(out). Voltage-gated potassium channel that mediates transmembrane potassium transport in excitable membranes. Forms tetrameric potassium-selective channels through which potassium ions pass in accordance with their electrochemical gradient. The channel alternates between opened and closed conformations in response to the voltage difference across the membrane. Can form functional homotetrameric channels and heterotetrameric channels that contain variable proportions of KCNA1, KCNA2, KCNA4, KCNA5, and possibly other family members as well; channel properties depend on the type of alpha subunits that are part of the channel. Channel properties are modulated by cytoplasmic beta subunits that regulate the subcellular location of the alpha subunits and promote rapid inactivation. In vivo, membranes probably contain a mixture of heteromeric potassium channel complexes, making it difficult to assign currents observed in intact tissues to any particular potassium channel family member. Homotetrameric KCNA4 forms a potassium channel that opens in response to membrane depolarization, followed by rapid spontaneous channel closure. Likewise, a heterotetrameric channel formed by KCNA1 and KCNA4 shows rapid inactivation. This chain is Potassium voltage-gated channel subfamily A member 4 (KCNA4), found in Mustela putorius furo (European domestic ferret).